Here is a 90-residue protein sequence, read N- to C-terminus: Small ribosomal subunit protein bS20 (90 aa).

It belongs to the bacterial ribosomal protein bS20 family.

Its function is as follows. Binds directly to 16S ribosomal RNA. This is Small ribosomal subunit protein bS20 from Nautilia profundicola (strain ATCC BAA-1463 / DSM 18972 / AmH).